A 254-amino-acid chain; its full sequence is Alcohol dehydrogenase 1 (254 aa).

10 to 33 contributes to the NAD(+) binding site; the sequence is FVAGLGGIGLDTSREIVKSGPKNL. Serine 138 provides a ligand contact to substrate. Tyrosine 151 acts as the Proton acceptor in catalysis.

It belongs to the short-chain dehydrogenases/reductases (SDR) family. In terms of assembly, homodimer.

It carries out the reaction a primary alcohol + NAD(+) = an aldehyde + NADH + H(+). It catalyses the reaction a secondary alcohol + NAD(+) = a ketone + NADH + H(+). The chain is Alcohol dehydrogenase 1 (Adh1) from Drosophila montana (Fruit fly).